Consider the following 309-residue polypeptide: Ribonuclease Z (309 aa).

Zn(2+) is bound by residues H63, H65, D67, H68, H145, D216, and H274. D67 acts as the Proton acceptor in catalysis.

This sequence belongs to the RNase Z family. As to quaternary structure, homodimer. Zn(2+) is required as a cofactor.

It catalyses the reaction Endonucleolytic cleavage of RNA, removing extra 3' nucleotides from tRNA precursor, generating 3' termini of tRNAs. A 3'-hydroxy group is left at the tRNA terminus and a 5'-phosphoryl group is left at the trailer molecule.. In terms of biological role, zinc phosphodiesterase, which displays some tRNA 3'-processing endonuclease activity. Probably involved in tRNA maturation, by removing a 3'-trailer from precursor tRNA. The chain is Ribonuclease Z from Streptococcus thermophilus (strain CNRZ 1066).